Consider the following 178-residue polypeptide: ATP-dependent protease subunit HslV (178 aa).

Residue T7 is part of the active site. The Na(+) site is built by G162, C165, and T168.

The protein belongs to the peptidase T1B family. HslV subfamily. A double ring-shaped homohexamer of HslV is capped on each side by a ring-shaped HslU homohexamer. The assembly of the HslU/HslV complex is dependent on binding of ATP.

It localises to the cytoplasm. It catalyses the reaction ATP-dependent cleavage of peptide bonds with broad specificity.. With respect to regulation, allosterically activated by HslU binding. Protease subunit of a proteasome-like degradation complex believed to be a general protein degrading machinery. This chain is ATP-dependent protease subunit HslV, found in Burkholderia multivorans (strain ATCC 17616 / 249).